The primary structure comprises 231 residues: Modulator of macroautophagy TMEM150B-B (231 aa).

M1 is a topological domain (cytoplasmic). The helical transmembrane segment at 2 to 22 (WAWALLPICLTVWATGGIWIV) threads the bilayer. The Extracellular segment spans residues 23 to 50 (YAMSVSNGSVNLSDGFPYISVSGTYPPQ). N-linked (GlcNAc...) asparagine glycosylation is found at N29 and N33. The chain crosses the membrane as a helical span at residues 51-71 (SCVFGQVLNVGAMLAVWISVI). At 72–83 (RFQQIRDYNCHS) the chain is on the cytoplasmic side. Residues 84-104 (VLNSVSLATGILCALGTSIVG) traverse the membrane as a helical segment. At 105–115 (NFQQSNQLQTH) the chain is on the extracellular side. Residues 116–136 (LAGAFLAFIIGNVYFWMQTAL) traverse the membrane as a helical segment. The Cytoplasmic segment spans residues 137 to 150 (TYMVKPKHGGCYIG). Residues 151-171 (PIRFCLSIACTALIVAMAVFL) form a helical membrane-spanning segment. At 172–183 (KMNMKSVSAICE) the chain is on the extracellular side. Residues 184-204 (WIVAMILFLLYGLFAVDFWHL) form a helical membrane-spanning segment. Topologically, residues 205 to 231 (DGHFFHVKKRRTVIPNEMEVSTVTLSI) are cytoplasmic.

It belongs to the DRAM/TMEM150 family.

It is found in the cell membrane. Its subcellular location is the endosome membrane. It localises to the cytoplasmic vesicle. The protein resides in the autophagosome membrane. Its function is as follows. Modulator of macroautophagy that causes accumulation of autophagosomes under basal conditions and enhances autophagic flux. Represses cell death and promotes long-term clonogenic survival of cells grown in the absence of glucose in a macroautophagy-independent manner. May have some role in extracellular matrix engulfment or growth factor receptor recycling, both of which can modulate cell survival. In Xenopus laevis (African clawed frog), this protein is Modulator of macroautophagy TMEM150B-B.